The following is a 396-amino-acid chain: Tryptophan synthase beta chain (396 aa).

Lys-86 is subject to N6-(pyridoxal phosphate)lysine.

Belongs to the TrpB family. In terms of assembly, tetramer of two alpha and two beta chains. Pyridoxal 5'-phosphate is required as a cofactor.

It carries out the reaction (1S,2R)-1-C-(indol-3-yl)glycerol 3-phosphate + L-serine = D-glyceraldehyde 3-phosphate + L-tryptophan + H2O. It functions in the pathway amino-acid biosynthesis; L-tryptophan biosynthesis; L-tryptophan from chorismate: step 5/5. The beta subunit is responsible for the synthesis of L-tryptophan from indole and L-serine. This is Tryptophan synthase beta chain from Francisella tularensis subsp. novicida (strain U112).